Here is a 546-residue protein sequence, read N- to C-terminus: Thermolysin (546 aa).

Positions Met-1–Ala-25 are cleaved as a signal peptide. Residues Lys-26–Val-228 constitute a propeptide, activation peptide. Ca(2+) contacts are provided by Asp-287, Asp-289, Gln-291, and Asp-368. Residue His-372 participates in Zn(2+) binding. Residue Glu-373 is part of the active site. Zn(2+) is bound by residues His-376 and Glu-396. Residues Glu-407, Asn-413, Asp-415, Glu-417, Glu-420, Tyr-423, Thr-424, Ile-427, and Asp-430 each contribute to the Ca(2+) site. The active-site Proton donor is the His-461.

It belongs to the peptidase M4 family. The cofactor is Ca(2+). Requires Zn(2+) as cofactor.

The protein resides in the secreted. It carries out the reaction Preferential cleavage: Xaa-|-Leu &gt; Xaa-|-Phe.. Extracellular zinc metalloprotease. This chain is Thermolysin, found in Alicyclobacillus acidocaldarius subsp. acidocaldarius (Bacillus acidocaldarius).